The following is a 367-amino-acid chain: 2-aminoethylphosphonate--pyruvate transaminase (367 aa).

N6-(pyridoxal phosphate)lysine is present on Lys-193.

Belongs to the class-V pyridoxal-phosphate-dependent aminotransferase family. PhnW subfamily. Homodimer. It depends on pyridoxal 5'-phosphate as a cofactor.

The enzyme catalyses (2-aminoethyl)phosphonate + pyruvate = phosphonoacetaldehyde + L-alanine. Functionally, involved in phosphonate degradation. In Vibrio vulnificus (strain YJ016), this protein is 2-aminoethylphosphonate--pyruvate transaminase.